The primary structure comprises 329 residues: Endonuclease 8-like 2 (329 aa).

The Schiff-base intermediate with DNA role is filled by Pro-2. Glu-3 acts as the Proton donor in catalysis. Lys-50 serves as the catalytic Proton donor; for beta-elimination activity. Lys-50 is subject to N6-acetyllysine. Ser-68 bears the Phosphoserine mark. The disordered stretch occupies residues 88-112 (GPSAQEPSAGPSGSGEPVPSRSAET). Lys-150 carries the N6-acetyllysine modification. Asn-227 lines the DNA pocket. The FPG-type zinc finger occupies 280–316 (QIYQKEQCPSGHQVMKETFGPPDGLQRLTWWCPQCQP). The active-site Proton donor; for delta-elimination activity is Arg-306.

It belongs to the FPG family. Binds EP300.

It localises to the nucleus. It catalyses the reaction 2'-deoxyribonucleotide-(2'-deoxyribose 5'-phosphate)-2'-deoxyribonucleotide-DNA = a 3'-end 2'-deoxyribonucleotide-(2,3-dehydro-2,3-deoxyribose 5'-phosphate)-DNA + a 5'-end 5'-phospho-2'-deoxyribonucleoside-DNA + H(+). Acetylation of Lys-50 leads to loss of DNA nicking activity. Functionally, involved in base excision repair of DNA damaged by oxidation or by mutagenic agents. Has DNA glycosylase activity towards 5-hydroxyuracil and other oxidized derivatives of cytosine with a preference for mismatched double-stranded DNA (DNA bubbles). Has low or no DNA glycosylase activity towards thymine glycol, 2-hydroxyadenine, hypoxanthine and 8-oxoguanine. Has AP (apurinic/apyrimidinic) lyase activity and introduces nicks in the DNA strand. Cleaves the DNA backbone by beta-delta elimination to generate a single-strand break at the site of the removed base with both 3'- and 5'-phosphates. The sequence is that of Endonuclease 8-like 2 (Neil2) from Mus musculus (Mouse).